The sequence spans 427 residues: Diaminobutyrate--2-oxoglutarate transaminase (427 aa).

Position 269 is an N6-(pyridoxal phosphate)lysine (Lys269).

The protein belongs to the class-III pyridoxal-phosphate-dependent aminotransferase family. Requires pyridoxal 5'-phosphate as cofactor.

The catalysed reaction is L-2,4-diaminobutanoate + 2-oxoglutarate = L-aspartate 4-semialdehyde + L-glutamate. Its pathway is amine and polyamine biosynthesis; ectoine biosynthesis; L-ectoine from L-aspartate 4-semialdehyde: step 1/3. Catalyzes reversively the conversion of L-aspartate beta-semialdehyde (ASA) to L-2,4-diaminobutyrate (DABA) by transamination with L-glutamate. The protein is Diaminobutyrate--2-oxoglutarate transaminase (ectB) of Marinococcus halophilus.